A 121-amino-acid polypeptide reads, in one-letter code: Large ribosomal subunit protein bL31 (121 aa).

The large ribosomal subunit protein bL31 stretch occupies residues 1–97; sequence MKEGIHPDYK…AKENRAAKRA (97 aa). Zn(2+)-binding residues include Cys16, Cys18, Cys36, and Cys39. Low complexity predominate over residues 65 to 80; sequence ATPAKAEPAKKAPAAE. The tract at residues 65–121 is disordered; the sequence is ATPAKAEPAKKAPAAEPAKKVEAAKENRAAKRAKAGKSKKSEAAPAAEAPAADAKPE. The interval 74 to 121 is unknown; it reads KKAPAAEPAKKVEAAKENRAAKRAKAGKSKKSEAAPAAEAPAADAKPE. The segment covering 81 to 93 has biased composition (basic and acidic residues); that stretch reads PAKKVEAAKENRA. Low complexity predominate over residues 107-121; that stretch reads AAPAAEAPAADAKPE.

This sequence belongs to the bacterial ribosomal protein bL31 family. Type A subfamily. In terms of assembly, part of the 50S ribosomal subunit. The cofactor is Zn(2+).

Binds the 23S rRNA. The protein is Large ribosomal subunit protein bL31 of Anaeromyxobacter dehalogenans (strain 2CP-C).